A 201-amino-acid polypeptide reads, in one-letter code: 3-isopropylmalate dehydratase small subunit (201 aa).

This sequence belongs to the LeuD family. LeuD type 1 subfamily. As to quaternary structure, heterodimer of LeuC and LeuD.

The enzyme catalyses (2R,3S)-3-isopropylmalate = (2S)-2-isopropylmalate. Its pathway is amino-acid biosynthesis; L-leucine biosynthesis; L-leucine from 3-methyl-2-oxobutanoate: step 2/4. Catalyzes the isomerization between 2-isopropylmalate and 3-isopropylmalate, via the formation of 2-isopropylmaleate. The polypeptide is 3-isopropylmalate dehydratase small subunit (Allorhizobium ampelinum (strain ATCC BAA-846 / DSM 112012 / S4) (Agrobacterium vitis (strain S4))).